A 125-amino-acid polypeptide reads, in one-letter code: Calcitonin receptor-stimulating peptide 2 (125 aa).

The first 25 residues, 1–25 (MGFWKFLPFLVLSFLVVYQAGMFQA), serve as a signal peptide directing secretion. Positions 26-77 (APFRSALENDFDPAILTEKEMCLLLAAVMNDYVQMKTSELKQEAEHFHITAQ) are excised as a propeptide. C81 and C86 are joined by a disulfide.

It belongs to the calcitonin family.

The protein resides in the secreted. The chain is Calcitonin receptor-stimulating peptide 2 (CRSP2) from Capra hircus (Goat).